The primary structure comprises 391 residues: Phosphoglycerate kinase (391 aa).

Substrate contacts are provided by residues 21 to 23 (DLN), R36, 59 to 62 (HLGR), R114, and R147. Residues K198, E315, and 344 to 347 (GGDT) contribute to the ATP site.

Belongs to the phosphoglycerate kinase family. Monomer.

The protein localises to the cytoplasm. The enzyme catalyses (2R)-3-phosphoglycerate + ATP = (2R)-3-phospho-glyceroyl phosphate + ADP. Its pathway is carbohydrate degradation; glycolysis; pyruvate from D-glyceraldehyde 3-phosphate: step 2/5. The sequence is that of Phosphoglycerate kinase from Haemophilus ducreyi (strain 35000HP / ATCC 700724).